The following is a 76-amino-acid chain: Alpha/kappa-conotoxin-like pl14.1 (76 aa).

Residues 1–27 (MPSVRSVTCCCLLWMMLSVQLVTPGSP) form the signal peptide. The propeptide occupies 28 to 39 (ATAQLSGQRTAR). Intrachain disulfides connect C46-C61 and C50-C63. The residue at position 64 (N64) is an Asparagine amide. Residues 65 to 76 (GKRDVVSSSMAV) constitute a propeptide that is removed on maturation.

The protein belongs to the conotoxin J superfamily. As to expression, expressed by the venom duct.

It is found in the secreted. In terms of biological role, highly inhibits both nicotinic acetylcholine receptors (neuronal (alpha-3/beta-4) and muscular (alpha-1/beta-1/epsilon/delta) subtypes) and the voltage-gated potassium channel Kv1.6/KCNA6 subtype. The sequence is that of Alpha/kappa-conotoxin-like pl14.1 from Conus planorbis (Planorbis cone).